A 206-amino-acid chain; its full sequence is MKKLLCAVLLSPLLYSNAVLADDAKQLRETLTGTESLKADFKQTVTDVNKKVIQSGAGVFALAHPNQFYWHLTAPDESKIVADGKDLWIYNPFAEEVVIMDFTQAITASPIALLVHRDDATWSQYAVTKKQDCYEIKPKATDAGISAVNVCFNKGTLNKFNVLDDKGNLSQFDLSNQHSISTGDKALFKFVLPDNVDVDDQRIKTQ.

The N-terminal stretch at 1–21 (MKKLLCAVLLSPLLYSNAVLA) is a signal peptide.

It belongs to the LolA family. In terms of assembly, monomer.

It is found in the periplasm. Functionally, participates in the translocation of lipoproteins from the inner membrane to the outer membrane. Only forms a complex with a lipoprotein if the residue after the N-terminal Cys is not an aspartate (The Asp acts as a targeting signal to indicate that the lipoprotein should stay in the inner membrane). This is Outer-membrane lipoprotein carrier protein from Shewanella oneidensis (strain ATCC 700550 / JCM 31522 / CIP 106686 / LMG 19005 / NCIMB 14063 / MR-1).